The chain runs to 392 residues: uncharacterized protein (392 aa).

The signal sequence occupies residues 1–19; that stretch reads MRRIVCPPVLFLSASLLTG. Cys-20 is lipidated: N-palmitoyl cysteine. Cys-20 carries the S-diacylglycerol cysteine lipid modification. A disordered region spans residues 148-173; sequence SSGSSGGGGGGSGSSSDGGIKNGSDE. Residues 151-160 are compositionally biased toward gly residues; the sequence is SSGGGGGGSG.

Belongs to the TP013X lipoprotein family.

Its subcellular location is the cell membrane. This is an uncharacterized protein from Treponema pallidum (strain Nichols).